A 490-amino-acid chain; its full sequence is MEKYILEGATGSWEIVVGLEVHAQVISKSKLFSGAATAFGAEPNSQVSLIDAAMPGMLPVVNRECIRQAVRTGLAIGAVINRVSKFDRKNYFYADLPQGYQISQLYHPIVGEGSLLIDVDGEEREIGIERIHVEQDAGKLMHDQHPDKSYVDLNRAGIALMEIVSKPDIRSPAEAGAYIRKLRAILRYVGSCDGNMEEGSMRADVNVSVRKAGEPFGTRCEIKNVNSVRFVQAAIEYEARRQIEVIEDGGEIIQETRLFDHDKGETRSLRSKEDAHDYRYFPDPDLLPLELPESFIDECRESLPELPDTKRQRYITQLNLTPYTASVITADHETAAWFEAMLEYFKAPDAKIATAAANWLTSDLFGALKKLGRDITDSPVSPKQGAELVGLVADGTLSGSLAKQVFEIMLESGQDPAVIVEERGLKQTSDTGAIEEVINKILADNQDKVEQYRSGKDKLFGFFVGQTMRAMGGKANPAVVNEILKKLLSA.

This sequence belongs to the GatB/GatE family. GatB subfamily. In terms of assembly, heterotrimer of A, B and C subunits.

It carries out the reaction L-glutamyl-tRNA(Gln) + L-glutamine + ATP + H2O = L-glutaminyl-tRNA(Gln) + L-glutamate + ADP + phosphate + H(+). The enzyme catalyses L-aspartyl-tRNA(Asn) + L-glutamine + ATP + H2O = L-asparaginyl-tRNA(Asn) + L-glutamate + ADP + phosphate + 2 H(+). Its function is as follows. Allows the formation of correctly charged Asn-tRNA(Asn) or Gln-tRNA(Gln) through the transamidation of misacylated Asp-tRNA(Asn) or Glu-tRNA(Gln) in organisms which lack either or both of asparaginyl-tRNA or glutaminyl-tRNA synthetases. The reaction takes place in the presence of glutamine and ATP through an activated phospho-Asp-tRNA(Asn) or phospho-Glu-tRNA(Gln). The protein is Aspartyl/glutamyl-tRNA(Asn/Gln) amidotransferase subunit B of Zymomonas mobilis subsp. mobilis (strain ATCC 31821 / ZM4 / CP4).